A 461-amino-acid polypeptide reads, in one-letter code: Bifunctional protein GlmU (461 aa).

The interval 1–229 (MEKYVVVLAA…FSESLGVNDR (229 aa)) is pyrophosphorylase. UDP-N-acetyl-alpha-D-glucosamine-binding positions include 8–11 (LAAG), K22, Q72, and 77–78 (GT). A Mg(2+)-binding site is contributed by D102. Residues G139, E154, N169, and N227 each contribute to the UDP-N-acetyl-alpha-D-glucosamine site. Mg(2+) is bound at residue N227. Positions 230 to 250 (IALAEATRIMQRRINEGHMRD) are linker. The segment at 251–461 (GVTFIDPATA…LPLSEDEEWK (211 aa)) is N-acetyltransferase. R332 and K350 together coordinate UDP-N-acetyl-alpha-D-glucosamine. H362 (proton acceptor) is an active-site residue. UDP-N-acetyl-alpha-D-glucosamine is bound by residues Y365 and N376. Positions 422 and 439 each coordinate acetyl-CoA.

It in the N-terminal section; belongs to the N-acetylglucosamine-1-phosphate uridyltransferase family. In the C-terminal section; belongs to the transferase hexapeptide repeat family. As to quaternary structure, homotrimer. Mg(2+) is required as a cofactor.

It localises to the cytoplasm. The catalysed reaction is alpha-D-glucosamine 1-phosphate + acetyl-CoA = N-acetyl-alpha-D-glucosamine 1-phosphate + CoA + H(+). The enzyme catalyses N-acetyl-alpha-D-glucosamine 1-phosphate + UTP + H(+) = UDP-N-acetyl-alpha-D-glucosamine + diphosphate. It functions in the pathway nucleotide-sugar biosynthesis; UDP-N-acetyl-alpha-D-glucosamine biosynthesis; N-acetyl-alpha-D-glucosamine 1-phosphate from alpha-D-glucosamine 6-phosphate (route II): step 2/2. Its pathway is nucleotide-sugar biosynthesis; UDP-N-acetyl-alpha-D-glucosamine biosynthesis; UDP-N-acetyl-alpha-D-glucosamine from N-acetyl-alpha-D-glucosamine 1-phosphate: step 1/1. The protein operates within bacterial outer membrane biogenesis; LPS lipid A biosynthesis. Its function is as follows. Catalyzes the last two sequential reactions in the de novo biosynthetic pathway for UDP-N-acetylglucosamine (UDP-GlcNAc). The C-terminal domain catalyzes the transfer of acetyl group from acetyl coenzyme A to glucosamine-1-phosphate (GlcN-1-P) to produce N-acetylglucosamine-1-phosphate (GlcNAc-1-P), which is converted into UDP-GlcNAc by the transfer of uridine 5-monophosphate (from uridine 5-triphosphate), a reaction catalyzed by the N-terminal domain. The polypeptide is Bifunctional protein GlmU (Lactobacillus delbrueckii subsp. bulgaricus (strain ATCC 11842 / DSM 20081 / BCRC 10696 / JCM 1002 / NBRC 13953 / NCIMB 11778 / NCTC 12712 / WDCM 00102 / Lb 14)).